Consider the following 424-residue polypeptide: Elongation factor Tu, mitochondrial (424 aa).

The 199-residue stretch at 36–234 (KPHVNVGTIG…VLDTKIPLPH (199 aa)) folds into the tr-type G domain. The G1 stretch occupies residues 45 to 52 (GHVDHGKT). Residue 45-52 (GHVDHGKT) coordinates GTP. Residues 86–90 (GITIT) are G2. A G3 region spans residues 107–110 (DCPG). Residues 107–111 (DCPGH) and 162–165 (NKMD) each bind GTP. The G4 stretch occupies residues 162–165 (NKMD). Positions 199-201 (AAA) are G5.

Belongs to the TRAFAC class translation factor GTPase superfamily. Classic translation factor GTPase family. EF-Tu/EF-1A subfamily.

It localises to the mitochondrion. This protein promotes the GTP-dependent binding of aminoacyl-tRNA to the A-site of ribosomes during protein biosynthesis. In Dictyostelium discoideum (Social amoeba), this protein is Elongation factor Tu, mitochondrial (tufm).